Reading from the N-terminus, the 676-residue chain is DNA ligase (676 aa).

Residues D42 to D46, S91 to L92, and E121 contribute to the NAD(+) site. Residue K123 is the N6-AMP-lysine intermediate of the active site. Residues R144, E178, K294, and K318 each coordinate NAD(+). Positions 412, 415, 430, and 435 each coordinate Zn(2+). The BRCT domain occupies N596–K676.

This sequence belongs to the NAD-dependent DNA ligase family. LigA subfamily. It depends on Mg(2+) as a cofactor. Requires Mn(2+) as cofactor.

It catalyses the reaction NAD(+) + (deoxyribonucleotide)n-3'-hydroxyl + 5'-phospho-(deoxyribonucleotide)m = (deoxyribonucleotide)n+m + AMP + beta-nicotinamide D-nucleotide.. Its function is as follows. DNA ligase that catalyzes the formation of phosphodiester linkages between 5'-phosphoryl and 3'-hydroxyl groups in double-stranded DNA using NAD as a coenzyme and as the energy source for the reaction. It is essential for DNA replication and repair of damaged DNA. This Levilactobacillus brevis (strain ATCC 367 / BCRC 12310 / CIP 105137 / JCM 1170 / LMG 11437 / NCIMB 947 / NCTC 947) (Lactobacillus brevis) protein is DNA ligase.